Consider the following 168-residue polypeptide: Large ribosomal subunit protein uL10 (168 aa).

Belongs to the universal ribosomal protein uL10 family. In terms of assembly, part of the ribosomal stalk of the 50S ribosomal subunit. The N-terminus interacts with L11 and the large rRNA to form the base of the stalk. The C-terminus forms an elongated spine to which L12 dimers bind in a sequential fashion forming a multimeric L10(L12)X complex.

Its function is as follows. Forms part of the ribosomal stalk, playing a central role in the interaction of the ribosome with GTP-bound translation factors. This chain is Large ribosomal subunit protein uL10, found in Ralstonia nicotianae (strain ATCC BAA-1114 / GMI1000) (Ralstonia solanacearum).